The following is a 258-amino-acid chain: Tetraspanin-18B (258 aa).

Residues 1-25 (MGLGEASARGTSMEGDCLSCIKYLM) lie on the Cytoplasmic side of the membrane. A helical membrane pass occupies residues 26 to 46 (FVFNFLIFLGGSFLLGVGVWV). At 47–61 (VVDPTGFREIVAANP) the chain is on the extracellular side. Residues 62–82 (LLFTGVYIILAMGGMLFLLGF) traverse the membrane as a helical segment. Over 83-94 (LGCCGAIRENKC) the chain is Cytoplasmic. The chain crosses the membrane as a helical span at residues 95–115 (LLLFFFMLILIIFLAELAAAI). Topologically, residues 116-228 (LAFIFREHLT…SAVVDYFEMY (113 aa)) are extracellular. N-linked (GlcNAc...) asparagine glycosylation is present at N141. The helical transmembrane segment at 229 to 249 (IYVAGALAIVVLTIELFAMVF) threads the bilayer. Residues 250–258 (AMCLFRGIQ) are Cytoplasmic-facing.

This sequence belongs to the tetraspanin (TM4SF) family.

It localises to the membrane. Its function is as follows. May regulate angiogenesis through KDR/VEGFR2 and NOTCH1 pathways. The chain is Tetraspanin-18B (tspan18b) from Danio rerio (Zebrafish).